We begin with the raw amino-acid sequence, 387 residues long: 3-ketoacyl-CoA thiolase (387 aa).

Cysteine 91 acts as the Acyl-thioester intermediate in catalysis. Residues histidine 343 and cysteine 373 each act as proton acceptor in the active site.

This sequence belongs to the thiolase-like superfamily. Thiolase family. As to quaternary structure, heterotetramer of two alpha chains (FadB) and two beta chains (FadA).

The protein localises to the cytoplasm. It catalyses the reaction an acyl-CoA + acetyl-CoA = a 3-oxoacyl-CoA + CoA. It participates in lipid metabolism; fatty acid beta-oxidation. Functionally, catalyzes the final step of fatty acid oxidation in which acetyl-CoA is released and the CoA ester of a fatty acid two carbons shorter is formed. This chain is 3-ketoacyl-CoA thiolase, found in Salmonella paratyphi A (strain ATCC 9150 / SARB42).